Consider the following 657-residue polypeptide: Threonine--tRNA ligase (657 aa).

The TGS domain occupies 7-70 (QQASIAITLP…LCDANIEIVT (64 aa)). Positions 253-555 (DHRKLGTELE…LIEHTAGNFP (303 aa)) are catalytic. Residues Cys351, His402, and His532 each coordinate Zn(2+).

It belongs to the class-II aminoacyl-tRNA synthetase family. As to quaternary structure, homodimer. Zn(2+) is required as a cofactor.

The protein resides in the cytoplasm. The catalysed reaction is tRNA(Thr) + L-threonine + ATP = L-threonyl-tRNA(Thr) + AMP + diphosphate + H(+). In terms of biological role, catalyzes the attachment of threonine to tRNA(Thr) in a two-step reaction: L-threonine is first activated by ATP to form Thr-AMP and then transferred to the acceptor end of tRNA(Thr). Also edits incorrectly charged L-seryl-tRNA(Thr). This is Threonine--tRNA ligase from Chlorobium limicola (strain DSM 245 / NBRC 103803 / 6330).